A 374-amino-acid chain; its full sequence is MAIRKKSTKSPPVLSHEFVLQNHADIVSCVAMVFLLGLMFEITAKASIIFVTLQYNVTLPATEEQATESVSLYYYGIKDLATVFFYMLVAIIIHAVIQEYMLDKINRRMHFSKTKHSKFNESGQLSAFYLFACVWGTFILISENYISDPTILWRAYPHNLMTFQMKFFYISQLAYWLHAFPELYFQKTKKEDIPRQLVYIGLYLFHIAGAYLLNLNHLGLVLLVLHYFVEFLFHISRLFYFSNEKYQKGFSLWAVLFVLGRLLTLILSVLTVGFGLARAENQKLDFSTGNFNVLAVRIAVLASICVTQAFMMWKFINFQLRRWREHSAFQAPAVKKKPTVTKGRSSKKGTENGVNGTLTSNVADSPRNKKEKSS.

Residues 1-29 (MAIRKKSTKSPPVLSHEFVLQNHADIVSC) are Cytoplasmic-facing. The helical transmembrane segment at 30 to 50 (VAMVFLLGLMFEITAKASIIF) threads the bilayer. At 51–76 (VTLQYNVTLPATEEQATESVSLYYYG) the chain is on the lumenal side. Asparagine 56 is a glycosylation site (N-linked (GlcNAc...) asparagine). A helical transmembrane segment spans residues 77–97 (IKDLATVFFYMLVAIIIHAVI). At 98–121 (QEYMLDKINRRMHFSKTKHSKFNE) the chain is on the cytoplasmic side. The 210-residue stretch at 117–326 (SKFNESGQLS…NFQLRRWREH (210 aa)) folds into the TLC domain. Residues 122 to 142 (SGQLSAFYLFACVWGTFILIS) traverse the membrane as a helical segment. Residues 143 to 159 (ENYISDPTILWRAYPHN) lie on the Lumenal side of the membrane. Residues 160-180 (LMTFQMKFFYISQLAYWLHAF) form a helical membrane-spanning segment. At 181–192 (PELYFQKTKKED) the chain is on the cytoplasmic side. The chain crosses the membrane as a helical span at residues 193-213 (IPRQLVYIGLYLFHIAGAYLL). The Lumenal portion of the chain corresponds to 214 to 217 (NLNH). The chain crosses the membrane as a helical span at residues 218–238 (LGLVLLVLHYFVEFLFHISRL). The Cytoplasmic portion of the chain corresponds to 239 to 251 (FYFSNEKYQKGFS). The chain crosses the membrane as a helical span at residues 252-272 (LWAVLFVLGRLLTLILSVLTV). The Lumenal portion of the chain corresponds to 273–297 (GFGLARAENQKLDFSTGNFNVLAVR). The helical transmembrane segment at 298–318 (IAVLASICVTQAFMMWKFINF) threads the bilayer. Topologically, residues 319–374 (QLRRWREHSAFQAPAVKKKPTVTKGRSSKKGTENGVNGTLTSNVADSPRNKKEKSS) are cytoplasmic. Over residues 334-347 (VKKKPTVTKGRSSK) the composition is skewed to basic residues. Residues 334–374 (VKKKPTVTKGRSSKKGTENGVNGTLTSNVADSPRNKKEKSS) are disordered. Positions 352–363 (NGVNGTLTSNVA) are enriched in polar residues. At serine 365 the chain carries Phosphoserine.

This sequence belongs to the TRAM family. Interacts with SEC61B. May interact with Derlin-1/DERL1. As to quaternary structure, (Microbial infection) Interacts with human cytomegalovirus/HHV-5 proteins US2 and US11. Post-translationally, N-glycosylated.

The protein resides in the endoplasmic reticulum membrane. In terms of biological role, involved in the translocation of nascent protein chains into or through the endoplasmic reticulum (ER) membrane by facilitating the proper chain positioning at the SEC61 channel. Regulates the exposure of nascent secretory protein chain to the cytosol during translocation into the ER. May affect the phospholipid bilayer in the vicinity of the lateral gate of the SEC61 channel, thereby facilitating ER protein transport. Intimately associates with transmembrane (TM) domain of nascent membrane proteins during the entire integration process into the ER membrane. Associates with the second TM domain of G-protein-coupled receptor opsin/OPSD nascent chain in the ER membrane, which may facilitate its integration into the membrane. Under conditions of ER stress, participates in the disposal of misfolded ER membrane proteins during the unfolded protein response (UPR), an integrated stress response (ISR) pathway, by selectively retrotranslocating misfolded ER-membrane proteins from the ER into the cytosol where they are ubiquitinated and degraded by the proteasome. (Microbial infection) In case of cytomegalovirus infection, participates in US2- and US11-mediated ER-to-cytosol retrotranslocation and subsequent degradation of major histocompatibility complex (MHC) class I heavy chains, thereby decreasing the immune detection by cytotoxic T-cells. This chain is Translocating chain-associated membrane protein 1, found in Homo sapiens (Human).